Reading from the N-terminus, the 310-residue chain is Sporozoite surface protein P36 (310 aa).

A signal peptide spans 1 to 24; the sequence is MRKALYSLLFYMCICLYIYTPVFM. 6-Cys domains are found at residues 25–157 and 168–309; these read ANLK…IKKT and YIKG…STKA. 6 cysteine pairs are disulfide-bonded: cysteine 38-cysteine 48, cysteine 62-cysteine 137, cysteine 80-cysteine 135, cysteine 172-cysteine 196, cysteine 210-cysteine 291, and cysteine 227-cysteine 289. N-linked (GlcNAc...) asparagine glycans are attached at residues asparagine 72, asparagine 114, and asparagine 118. A glycan (N-linked (GlcNAc...) asparagine) is linked at asparagine 290.

It is found in the cell surface. It localises to the cell membrane. Its function is as follows. Involved in sporozoite infection of hepatocytes and replication therein. This is Sporozoite surface protein P36 (P36) from Plasmodium yoelii yoelii.